A 157-amino-acid polypeptide reads, in one-letter code: Alanyl-tRNA editing protein AlaX-S (157 aa).

Zn(2+)-binding residues include His-9, His-13, Cys-116, and His-120.

It belongs to the class-II aminoacyl-tRNA synthetase family. Editing domain AlaX-S subfamily. Monomer and homodimer; the dimer is less active in tRNA editing and does not have a zinc ion associated with it. Another report shows only a monomeric form. It depends on Zn(2+) as a cofactor.

It localises to the cytoplasm. Functions in trans to edit the amino acid moiety from mischarged charged Ser-tRNA(Ala). Has little activity against Gly-tRNA(Ala). This chain is Alanyl-tRNA editing protein AlaX-S (alaXS), found in Pyrococcus horikoshii (strain ATCC 700860 / DSM 12428 / JCM 9974 / NBRC 100139 / OT-3).